We begin with the raw amino-acid sequence, 304 residues long: Nucleotide-binding protein RHA1_ro07174 (304 aa).

Residue Gly-24–Gln-31 participates in ATP binding. Residue Asp-75–Ser-78 participates in GTP binding.

Belongs to the RapZ-like family.

Displays ATPase and GTPase activities. The protein is Nucleotide-binding protein RHA1_ro07174 of Rhodococcus jostii (strain RHA1).